The chain runs to 92 residues: Cell division topological specificity factor (92 aa).

The protein belongs to the MinE family.

Functionally, prevents the cell division inhibition by proteins MinC and MinD at internal division sites while permitting inhibition at polar sites. This ensures cell division at the proper site by restricting the formation of a division septum at the midpoint of the long axis of the cell. This chain is Cell division topological specificity factor, found in Gluconobacter oxydans (strain 621H) (Gluconobacter suboxydans).